We begin with the raw amino-acid sequence, 452 residues long: UDP-N-acetylmuramoyl-tripeptide--D-alanyl-D-alanine ligase (452 aa).

107–113 (GSSGKTS) lines the ATP pocket.

The protein belongs to the MurCDEF family. MurF subfamily. As to quaternary structure, monomer.

The protein resides in the cytoplasm. It catalyses the reaction D-alanyl-D-alanine + UDP-N-acetyl-alpha-D-muramoyl-L-alanyl-gamma-D-glutamyl-meso-2,6-diaminopimelate + ATP = UDP-N-acetyl-alpha-D-muramoyl-L-alanyl-gamma-D-glutamyl-meso-2,6-diaminopimeloyl-D-alanyl-D-alanine + ADP + phosphate + H(+). The protein operates within cell wall biogenesis; peptidoglycan biosynthesis. Functionally, involved in cell wall formation. Catalyzes the final step in the synthesis of UDP-N-acetylmuramoyl-pentapeptide, the precursor of murein. This chain is UDP-N-acetylmuramoyl-tripeptide--D-alanyl-D-alanine ligase, found in Escherichia coli (strain K12).